Reading from the N-terminus, the 274-residue chain is Large ribosomal subunit protein uL2 (274 aa).

2 disordered regions span residues 21-59 (KVGL…GGHK) and 223-274 (VAMN…QLKG). The segment covering 32 to 42 (SLTSGKKSSGG) has biased composition (low complexity). Basic residues predominate over residues 45 to 59 (NHGRITTRHRGGGHK). The segment covering 263–274 (KSSDKYIKQLKG) has biased composition (basic and acidic residues).

This sequence belongs to the universal ribosomal protein uL2 family. Part of the 50S ribosomal subunit. Forms a bridge to the 30S subunit in the 70S ribosome.

In terms of biological role, one of the primary rRNA binding proteins. Required for association of the 30S and 50S subunits to form the 70S ribosome, for tRNA binding and peptide bond formation. It has been suggested to have peptidyltransferase activity; this is somewhat controversial. Makes several contacts with the 16S rRNA in the 70S ribosome. The chain is Large ribosomal subunit protein uL2 from Wolbachia sp. subsp. Drosophila simulans (strain wRi).